We begin with the raw amino-acid sequence, 304 residues long: Protein pxr1 (304 aa).

Residues 1-11 (MGLAAPRKKTK) are compositionally biased toward basic residues. Disordered stretches follow at residues 1–25 (MGLAAPRKKTKISHDPNNTSWSRST), 144–238 (NATA…DTET), and 256–276 (TSLLASNGPSTSRERQPMGRR). Residues 15–25 (DPNNTSWSRST) show a composition bias toward polar residues. The G-patch domain maps to 25-79 (TDGFGHRILKAQGWTPGDFLGARNATHSDLFTTASASHIRVVLKDDTLGLGARPK). 2 stretches are compositionally biased toward basic and acidic residues: residues 154–170 (LRVDFPRETSSNEHENG) and 204–238 (GKEMDMSPRKSREKKQEKIQKKRKIGDCDRLDTET). Polar residues predominate over residues 256 to 266 (TSLLASNGPST).

It belongs to the PINX1 family.

Its subcellular location is the nucleus. It is found in the nucleolus. Functionally, involved in rRNA-processing at A0, A1 and A2 sites and negatively regulates telomerase. In Aspergillus fumigatus (strain ATCC MYA-4609 / CBS 101355 / FGSC A1100 / Af293) (Neosartorya fumigata), this protein is Protein pxr1 (pxr1).